The primary structure comprises 758 residues: Calcium up-regulated protein E (758 aa).

The segment at 1–22 (MINIEDISKSSNQSEEKQLKST) is disordered. 2 consecutive Ricin B-type lectin domains span residues 25–145 (KPKY…WTTF) and 156–288 (GYFQ…WIAN).

The protein belongs to the cup family.

It localises to the cytoplasm. It is found in the membrane. Its function is as follows. May play an important role in stabilizing and/or regulating the cell membrane during Ca(2+) stress or certain stages of development. The polypeptide is Calcium up-regulated protein E (cupE) (Dictyostelium discoideum (Social amoeba)).